We begin with the raw amino-acid sequence, 347 residues long: Protein POOR HOMOLOGOUS SYNAPSIS 1 (347 aa).

Its subcellular location is the cytoplasm. Its function is as follows. Required for accurate chromosome segregation in meiosis. Required for pairing to occur between homologous chromosomes. Acts in early recombination steps and ensures pairing fidelity and proper repair of meiotic DNA double-strand-breaks. Regulates recombination and pairing of homologous chromosomes during meiotic prophase by controlling transport of RAD50 from cytoplasm to the nucleus. May affect pairing of the gene-rich fraction of the genome rather than preventing pairing between repetitive DNA elements. In Zea mays (Maize), this protein is Protein POOR HOMOLOGOUS SYNAPSIS 1.